The chain runs to 487 residues: Glutamyl-tRNA(Gln) amidotransferase subunit A (487 aa).

Catalysis depends on charge relay system residues K77 and S152. S176 acts as the Acyl-ester intermediate in catalysis.

It belongs to the amidase family. GatA subfamily. In terms of assembly, heterotrimer of A, B and C subunits.

The enzyme catalyses L-glutamyl-tRNA(Gln) + L-glutamine + ATP + H2O = L-glutaminyl-tRNA(Gln) + L-glutamate + ADP + phosphate + H(+). Allows the formation of correctly charged Gln-tRNA(Gln) through the transamidation of misacylated Glu-tRNA(Gln) in organisms which lack glutaminyl-tRNA synthetase. The reaction takes place in the presence of glutamine and ATP through an activated gamma-phospho-Glu-tRNA(Gln). The polypeptide is Glutamyl-tRNA(Gln) amidotransferase subunit A (Ligilactobacillus salivarius (strain UCC118) (Lactobacillus salivarius)).